Reading from the N-terminus, the 129-residue chain is MAKTAKKGPKKAKRNVPNGVAHIQSTFNNTIVSITDTAGEVIAWSSAGASGFKGARKGTPFAAQTAAEAAARRALEQGMRQIEVLVRGPGSGRETAIRALQVAGLEITLIRDVTPLPHNGCRRAKRRRV.

Belongs to the universal ribosomal protein uS11 family. In terms of assembly, part of the 30S ribosomal subunit. Interacts with proteins S7 and S18. Binds to IF-3.

Its function is as follows. Located on the platform of the 30S subunit, it bridges several disparate RNA helices of the 16S rRNA. Forms part of the Shine-Dalgarno cleft in the 70S ribosome. The sequence is that of Small ribosomal subunit protein uS11 from Synechococcus sp. (strain RCC307).